The primary structure comprises 84 residues: MERSNRKTRIGRVVSNKMDKTIVVAVETKVRHPLYGKIMNRTTKFKAHDENNTANINDKVLIMETRPLSKQKRWRLVEVVEKAK.

This sequence belongs to the universal ribosomal protein uS17 family. Part of the 30S ribosomal subunit.

One of the primary rRNA binding proteins, it binds specifically to the 5'-end of 16S ribosomal RNA. This chain is Small ribosomal subunit protein uS17, found in Clostridium botulinum (strain 657 / Type Ba4).